The following is a 293-amino-acid chain: MPSLKDLRNRIASVKATQKITKAMQMVASAKLRRAQLAAEAARPYAERMDEVLASLASIVGTGPDAPKLLAGNGYDRTHLLVVCTAERGLCGGFNASIARLARDTAEKLIAEGKKVKILCVGKKGYDLLKRQFGEQILELIELRSVRTIGFVNAEAIGRKILNLYKDAEFDVCTLFFAKFRTVLHQIPTAQQLIPLAVKTQEDAPAAPPSLYEYEPSEEQILATLLPRNITIQVLRALLENAASEQGARMSAMDNASRNAGEMIKKQTLKYNRSRQAMITKELIEIISGAEAL.

It belongs to the ATPase gamma chain family. F-type ATPases have 2 components, CF(1) - the catalytic core - and CF(0) - the membrane proton channel. CF(1) has five subunits: alpha(3), beta(3), gamma(1), delta(1), epsilon(1). CF(0) has three main subunits: a, b and c.

It is found in the cell inner membrane. Produces ATP from ADP in the presence of a proton gradient across the membrane. The gamma chain is believed to be important in regulating ATPase activity and the flow of protons through the CF(0) complex. The polypeptide is ATP synthase gamma chain (Beijerinckia indica subsp. indica (strain ATCC 9039 / DSM 1715 / NCIMB 8712)).